The sequence spans 366 residues: Beta sliding clamp (366 aa).

This sequence belongs to the beta sliding clamp family. As to quaternary structure, forms a ring-shaped head-to-tail homodimer around DNA which binds and tethers DNA polymerases and other proteins to the DNA. The DNA replisome complex has a single clamp-loading complex (3 tau and 1 each of delta, delta', psi and chi subunits) which binds 3 Pol III cores (1 core on the leading strand and 2 on the lagging strand) each with a beta sliding clamp dimer. Additional proteins in the replisome are other copies of gamma, psi and chi, Ssb, DNA helicase and RNA primase.

The protein localises to the cytoplasm. In terms of biological role, confers DNA tethering and processivity to DNA polymerases and other proteins. Acts as a clamp, forming a ring around DNA (a reaction catalyzed by the clamp-loading complex) which diffuses in an ATP-independent manner freely and bidirectionally along dsDNA. Initially characterized for its ability to contact the catalytic subunit of DNA polymerase III (Pol III), a complex, multichain enzyme responsible for most of the replicative synthesis in bacteria; Pol III exhibits 3'-5' exonuclease proofreading activity. The beta chain is required for initiation of replication as well as for processivity of DNA replication. The protein is Beta sliding clamp (dnaN) of Buchnera aphidicola subsp. Acyrthosiphon pisum (strain APS) (Acyrthosiphon pisum symbiotic bacterium).